The chain runs to 463 residues: Soluble pyridine nucleotide transhydrogenase (463 aa).

35-44 (EDKPTVGGNC) contributes to the FAD binding site.

This sequence belongs to the class-I pyridine nucleotide-disulfide oxidoreductase family. It depends on FAD as a cofactor.

Its subcellular location is the cytoplasm. It carries out the reaction NAD(+) + NADPH = NADH + NADP(+). In terms of biological role, conversion of NADPH, generated by peripheral catabolic pathways, to NADH, which can enter the respiratory chain for energy generation. The protein is Soluble pyridine nucleotide transhydrogenase of Marinobacter nauticus (strain ATCC 700491 / DSM 11845 / VT8) (Marinobacter aquaeolei).